A 185-amino-acid polypeptide reads, in one-letter code: uncharacterized protein (185 aa).

This is an uncharacterized protein from Bacillus subtilis (strain 168).